The primary structure comprises 629 residues: MHFHERFDVIVVGGGHAGTEAALAAARMGSKTLLLTHNIDTLGQMSCNPAIGGIGKGHLVKEIDALGGAMAIATDYAGIQFRTLNSSKGPAVRATRAQADRALYRQKIQNILQNQPNLRIFQQAVDDLIVENHQVVGVVTQMGLAFESPAVVLTTGTFLSGKIHIGLENYSGGRAGDPPAIALANRLRELPIRVGRLKTGTPPRIDANTIDFSQMAEQKGDSPLPVMSFMGDVSHHPKQISCWITHTNEKTHEIIRGGLDRSPMYSGVIEGIGPRYCPSIEDKIHRFADKSSHQIFIEPEGLNTSEIYPNGISTSLPFDVQLNLVRSIKGMENAEIMRPGYAIEYDYFDPRDLKNSLETKAINGLFFAGQINGTTGYEEAGAQGLLAGMNASLQVQGKEAWCPRRDEAYLGVLVDDLSTLGTKEPYRMFTSRAEYRLLLREDNADIRLTAKGRELGLVDDARWAAFSEKLESIELELQRLRGQWVHPNSPLIHALNPHLNTPISREASFEELLRRPEMDYSKLMQIEGFGPGLEDPQAAEQVQIQVKYSGYIQRQQEEINKAVRNENTGLPLTLDYKEVPGLSNEVIAKLNNHKPETIGQASRISGITPAAISILLVHLKKRGLLRKSA.

An FAD-binding site is contributed by 13 to 18 (GGGHAG). 273–287 (GPRYCPSIEDKIHRF) provides a ligand contact to NAD(+).

This sequence belongs to the MnmG family. As to quaternary structure, homodimer. Heterotetramer of two MnmE and two MnmG subunits. Requires FAD as cofactor.

The protein localises to the cytoplasm. In terms of biological role, NAD-binding protein involved in the addition of a carboxymethylaminomethyl (cmnm) group at the wobble position (U34) of certain tRNAs, forming tRNA-cmnm(5)s(2)U34. This is tRNA uridine 5-carboxymethylaminomethyl modification enzyme MnmG from Shewanella baltica (strain OS195).